The chain runs to 316 residues: dTDP-4-dehydro-6-deoxyglucose reductase (316 aa).

16-17 (FI) is a binding site for NAD(+). The active-site Proton acceptor is Tyr-151. Lys-155 is an NAD(+) binding site.

It belongs to the NAD(P)-dependent epimerase/dehydratase family.

The enzyme catalyses dTDP-alpha-D-fucose + NAD(+) = dTDP-4-dehydro-6-deoxy-alpha-D-glucose + NADH + H(+). The catalysed reaction is dTDP-alpha-D-fucose + NADP(+) = dTDP-4-dehydro-6-deoxy-alpha-D-glucose + NADPH + H(+). It participates in bacterial outer membrane biogenesis; LPS O-antigen biosynthesis. With respect to regulation, inhibited by Cu(2+), while other divalent cations such as Ca(2+), Co(2+), Fe(2+), Mn(2+) and Mg(2+) have no obvious effects on enzyme activity. Catalyzes the stereospecific reduction of the C-4 keto group of dTDP-4-dehydro-6-deoxy-D-glucose, leading to dTDP-D-fucopyranose. This is a step in the biosynthesis of D-fucofuranose, a component of E.coli O52 O antigen. Is more efficient using NADH than NADPH as cosubstrate. The chain is dTDP-4-dehydro-6-deoxyglucose reductase (fcf1) from Escherichia coli.